Here is a 64-residue protein sequence, read N- to C-terminus: Cytotoxin homolog S4C8 (64 aa).

Disulfide bonds link Cys-3-Cys-22, Cys-15-Cys-40, Cys-44-Cys-56, and Cys-57-Cys-62.

The protein belongs to the three-finger toxin family. Short-chain subfamily. Orphan group XIII sub-subfamily. Expressed by the venom gland.

It localises to the secreted. This chain is Cytotoxin homolog S4C8, found in Aspidelaps scutatus (Shield-nose snake).